The chain runs to 607 residues: Guanine nucleotide-binding protein-like 1 (607 aa).

Basic residues predominate over residues 1 to 14 (MPRKKPFSVKQKKK). Residues 1–81 (MPRKKPFSVK…GPRGYDPNRY (81 aa)) form a disordered region. Residues 15 to 26 (QLQDKRERKRGL) are compositionally biased toward basic and acidic residues. Ser32, Ser33, and Ser34 each carry phosphoserine. Phosphothreonine is present on residues Thr48 and Thr50. 2 positions are modified to phosphoserine: Ser51 and Ser68. A CP-type G domain is found at 178–418 (WRQLWRVLEM…LCDCPGLIFP (241 aa)). 225-228 (NKVD) serves as a coordination point for GTP. The residue at position 324 (Ser324) is a Phosphoserine. Residues 367–374 (GFPNVGKS) and 411–415 (DCPGL) each bind GTP. The interval 544–607 (GRVGPAGDEE…PYALLGEGEC (64 aa)) is disordered. Over residues 550–585 (GDEEEEEEEELSSSCEEEGEEDRDADEEGEGDEDTP) the composition is skewed to acidic residues. Ser561, Ser562, and Ser563 each carry phosphoserine.

Belongs to the TRAFAC class YlqF/YawG GTPase family.

Possible regulatory or functional link with the histocompatibility cluster. The polypeptide is Guanine nucleotide-binding protein-like 1 (Gnl1) (Rattus norvegicus (Rat)).